Reading from the N-terminus, the 127-residue chain is Major sperm protein 63 (127 aa).

Alanine 2 carries the post-translational modification N-acetylalanine. Residues aspartate 9 to asparagine 126 enclose the MSP domain.

Sperm.

It is found in the cell projection. The protein resides in the pseudopodium. Its subcellular location is the cytoplasm. The protein localises to the cytoskeleton. Functionally, central component in molecular interactions underlying sperm crawling. Forms an extensive filament system that extends from sperm villipoda, along the leading edge of the pseudopod. The chain is Major sperm protein 63 (msp-63) from Caenorhabditis elegans.